We begin with the raw amino-acid sequence, 252 residues long: Uridylate kinase (252 aa).

27 to 30 provides a ligand contact to ATP; it reads KLGG. Gly68 is a UMP binding site. ATP-binding residues include Gly69 and Arg73. UMP is bound by residues Asp88 and 149 to 156; that span reads MGLPYFST. ATP contacts are provided by Tyr182 and Asp185.

This sequence belongs to the UMP kinase family. As to quaternary structure, homohexamer.

It is found in the cytoplasm. It carries out the reaction UMP + ATP = UDP + ADP. The protein operates within pyrimidine metabolism; CTP biosynthesis via de novo pathway; UDP from UMP (UMPK route): step 1/1. With respect to regulation, inhibited by UTP. Functionally, catalyzes the reversible phosphorylation of UMP to UDP. The sequence is that of Uridylate kinase from Mycobacterium sp. (strain JLS).